Consider the following 711-residue polypeptide: Putative membrane protein ActII-3 (711 aa).

The next 12 membrane-spanning stretches (helical) occupy residues 14 to 34, 175 to 195, 199 to 219, 235 to 255, 281 to 301, 313 to 333, 369 to 389, 516 to 536, 540 to 560, 573 to 593, 623 to 643, and 645 to 665; these read LKWL…PLAG, ADFK…VVTY, LLWL…QAIV, AMIL…LLVA, AIVA…LAAL, VGVL…LVIF, AVWV…VTLN, IIPV…RALV, LLIA…ALFF, FPLW…IFLV, AGLV…VFIA, and LGFT…SVLV. The disordered stretch occupies residues 685–711; that stretch reads REDPSEDPAVSGMPDSIDSEASTTASR.

It belongs to the resistance-nodulation-cell division (RND) (TC 2.A.6) family. MmpL subfamily.

The protein localises to the cell membrane. The polypeptide is Putative membrane protein ActII-3 (actII-3) (Streptomyces coelicolor (strain ATCC BAA-471 / A3(2) / M145)).